The chain runs to 109 residues: Putative glutaredoxin-C11 (109 aa).

Positions 2 to 108 (AEMVARLASE…PLLKSAGALW (107 aa)) constitute a Glutaredoxin domain. An intrachain disulfide couples C22 to C25. Residues 106–109 (ALWL) carry the Responsive for interaction with TGA factors motif.

The protein belongs to the glutaredoxin family. CC-type subfamily.

Its subcellular location is the cytoplasm. It localises to the nucleus. Its function is as follows. Has a glutathione-disulfide oxidoreductase activity in the presence of NADPH and glutathione reductase. Reduces low molecular weight disulfides and proteins. The protein is Putative glutaredoxin-C11 (GRXC11) of Oryza sativa subsp. japonica (Rice).